We begin with the raw amino-acid sequence, 478 residues long: MLLWVQQALLALLLPTLLAQGEARRSRNTTRPALLRLSDYLLTNYRKGVRPVRDWRKPTTVSIDVIVYAILNVDEKNQVLTTYIWYRQYWTDEFLQWNPEDFDNITKLSIPTDSIWVPDILINEFVDVGKSPNIPYVYIRHQGEVQNYKPLQVVTACSLDIYNFPFDVQNCSLTFTSWLHTIQDINISLWRLPEKVKSDRSVFMNQGEWELLGVLPYFREFSMESSNYYAEMKFYVVIRRRPLFYVVSLLLPSIFLMVMDIVGFYLPPNSGERVSFKITLLLGYSVFLIIVSDTLPATAIGTPLIGVYFVVCMALLVISLAETIFIVRLVHKQDLQQPVPAWLRHLVLERIAWLLCLREQSTSQRPPATSQATKTDDCSAMGNHCSHMGGPQDFEKSPRDRCSPPPPPREASLAVCGLLQELSSIRQFLEKRDEIREVARDWLRVGSVLDKLLFHIYLLAVLAYSITLVMLWSIWQYA.

The first 23 residues, 1 to 23, serve as a signal peptide directing secretion; that stretch reads MLLWVQQALLALLLPTLLAQGEA. Residues 24–241 lie on the Extracellular side of the membrane; the sequence is RRSRNTTRPA…MKFYVVIRRR (218 aa). 4 N-linked (GlcNAc...) asparagine glycosylation sites follow: Asn28, Asn104, Asn170, and Asn186. A disulfide bridge connects residues Cys157 and Cys171. Residues 242 to 268 form a helical membrane-spanning segment; it reads PLFYVVSLLLPSIFLMVMDIVGFYLPP. Topologically, residues 269–273 are cytoplasmic; it reads NSGER. A helical transmembrane segment spans residues 274–292; sequence VSFKITLLLGYSVFLIIVS. Residues 293-302 are Extracellular-facing; that stretch reads DTLPATAIGT. Residues 303–321 form a helical membrane-spanning segment; the sequence is PLIGVYFVVCMALLVISLA. At 322 to 455 the chain is on the cytoplasmic side; that stretch reads ETIFIVRLVH…GSVLDKLLFH (134 aa). The disordered stretch occupies residues 389-408; it reads GGPQDFEKSPRDRCSPPPPP. The span at 393–402 shows a compositional bias: basic and acidic residues; sequence DFEKSPRDRC. The interval 414–450 is HA-stretch; determines single-channel conductance in 5-HT3 receptors; it reads AVCGLLQELSSIRQFLEKRDEIREVARDWLRVGSVLD. A helical membrane pass occupies residues 456 to 475; that stretch reads IYLLAVLAYSITLVMLWSIW. Residues 476–478 lie on the Extracellular side of the membrane; the sequence is QYA.

Belongs to the ligand-gated ion channel (TC 1.A.9) family. 5-hydroxytryptamine receptor (TC 1.A.9.2) subfamily. HTR3A sub-subfamily. As to quaternary structure, forms homopentameric as well as heteropentameric serotonin-activated cation-selective channel complexes with HTR3B or HTR3C or HTR3D or HTR3E. The homomeric complex is functional but exhibits low conductance with modified voltage dependence, and decreased agonist and antagonist affinity. Heteropentameric complexes display properties which resemble that of neuronal serotonin-activated channels in vivo. Interacts with RIC3. As to expression, expressed in cerebral cortex, amygdala, hippocampus, and testis. Detected in monocytes of the spleen and tonsil, in small and large intestine, uterus, prostate, ovary and placenta.

It is found in the postsynaptic cell membrane. The protein localises to the cell membrane. The enzyme catalyses Na(+)(in) = Na(+)(out). The catalysed reaction is K(+)(in) = K(+)(out). It carries out the reaction Ca(2+)(in) = Ca(2+)(out). It catalyses the reaction Mg(2+)(in) = Mg(2+)(out). Functionally, forms serotonin (5-hydroxytryptamine/5-HT3)-activated cation-selective channel complexes, which when activated cause fast, depolarizing responses in neurons. This Homo sapiens (Human) protein is 5-hydroxytryptamine receptor 3A.